The following is a 785-amino-acid chain: Copal-8-ol diphosphate hydratase TPSSA3, chloroplastic (785 aa).

Arg-240 is a substrate binding site. Positions 372 and 374 each coordinate Mg(2+). The DXDD motif signature appears at 372 to 375 (DIDD). Substrate is bound at residue Arg-459.

It belongs to the terpene synthase family. Mg(2+) serves as cofactor.

The protein localises to the plastid. The protein resides in the chloroplast. It catalyses the reaction (2E,6E,10E)-geranylgeranyl diphosphate + H2O = 8-hydroxycopalyl diphosphate. It participates in secondary metabolite biosynthesis; terpenoid biosynthesis. Functionally, involved in the biosynthesis of labdane-type diterpenoid including sclareol, a diterpene-diol that is used as fragrance and flavoring, and has anticancer effects (able to kill leukemic and colon cancer cells by apoptosis). Sclareol can also be used as synthesis precursor of ambergris substitution fragance products such as ambrox. Terpene synthase that produces 8-hydroxycopalyl diphosphate from geranylgeranyl diphosphate (GGPP). The polypeptide is Copal-8-ol diphosphate hydratase TPSSA3, chloroplastic (Salvia sclarea (Clary sage)).